The primary structure comprises 683 residues: Probable metal-nicotianamine transporter YSL3 (683 aa).

14 helical membrane-spanning segments follow: residues 29 to 49 (LVTPRAMAVAVVLSVVICFVG), 58 to 78 (IVPALNMPASILSFFLLKWLI), 97 to 117 (MFLLTCIITCLNLALTSGFAT), 142 to 162 (HVPIGKWIVYLFLVGMTGVLI), 204 to 224 (VATIFKVFFGSFSWSMFQWFY), 265 to 285 (IVNFGLFFGAIISWGFLYPFL), 309 to 329 (VFISVTLIITDGMINFLTLIT), 372 to 392 (IPIPVPVAAYITCAAISTIAI), 404 to 424 (LAVLYMVIPVVTFCNTYATGL), 448 to 468 (PGAVVASLLASGVIVAALHIS), 490 to 510 (TGQIFGVAVGSILCPCVFLAF), 553 to 573 (CMTFCVVAFCVTVIIDAVVLV), 595 to 615 (FFAGSYFTIDMCVGSLLLLAW), and 628 to 648 (SAVAAGLICGEGLFTLPSALL).

It belongs to the YSL (TC 2.A.67.2) family.

The protein resides in the membrane. Its function is as follows. May be involved in the transport of nicotianamine-chelated metals. The sequence is that of Probable metal-nicotianamine transporter YSL3 (YSL3) from Oryza sativa subsp. japonica (Rice).